The primary structure comprises 403 residues: 26S proteasome regulatory subunit 8 (403 aa).

186–193 (GPPGTGKT) is an ATP binding site.

The protein belongs to the AAA ATPase family.

The protein localises to the cytoplasm. The protein resides in the nucleus. In terms of biological role, the 26S proteasome is involved in the ATP-dependent degradation of ubiquitinated proteins. The regulatory (or ATPase) complex confers ATP dependency and substrate specificity to the 26S complex. The chain is 26S proteasome regulatory subunit 8 (psmC5) from Dictyostelium discoideum (Social amoeba).